The primary structure comprises 364 residues: tRNA 2-selenouridine synthase (364 aa).

Residues 14–137 form the Rhodanese domain; that stretch reads LIADTPIIDV…LRQTAIQATI (124 aa). The active-site S-selanylcysteine intermediate is Cys97.

Belongs to the SelU family. Monomer.

It catalyses the reaction 5-methylaminomethyl-2-thiouridine(34) in tRNA + selenophosphate + (2E)-geranyl diphosphate + H2O + H(+) = 5-methylaminomethyl-2-selenouridine(34) in tRNA + (2E)-thiogeraniol + phosphate + diphosphate. The enzyme catalyses 5-methylaminomethyl-2-thiouridine(34) in tRNA + (2E)-geranyl diphosphate = 5-methylaminomethyl-S-(2E)-geranyl-thiouridine(34) in tRNA + diphosphate. The catalysed reaction is 5-methylaminomethyl-S-(2E)-geranyl-thiouridine(34) in tRNA + selenophosphate + H(+) = 5-methylaminomethyl-2-(Se-phospho)selenouridine(34) in tRNA + (2E)-thiogeraniol. It carries out the reaction 5-methylaminomethyl-2-(Se-phospho)selenouridine(34) in tRNA + H2O = 5-methylaminomethyl-2-selenouridine(34) in tRNA + phosphate. Functionally, involved in the post-transcriptional modification of the uridine at the wobble position (U34) of tRNA(Lys), tRNA(Glu) and tRNA(Gln). Catalyzes the conversion of 2-thiouridine (S2U-RNA) to 2-selenouridine (Se2U-RNA). Acts in a two-step process involving geranylation of 2-thiouridine (S2U) to S-geranyl-2-thiouridine (geS2U) and subsequent selenation of the latter derivative to 2-selenouridine (Se2U) in the tRNA chain. The polypeptide is tRNA 2-selenouridine synthase (Escherichia coli O81 (strain ED1a)).